Here is a 57-residue protein sequence, read N- to C-terminus: UPF0391 membrane protein BRADO2787 (57 aa).

2 helical membrane-spanning segments follow: residues 6–26 (WALL…TGVS) and 35–55 (ILFY…LTIF).

It belongs to the UPF0391 family.

The protein localises to the cell membrane. This chain is UPF0391 membrane protein BRADO2787, found in Bradyrhizobium sp. (strain ORS 278).